We begin with the raw amino-acid sequence, 70 residues long: DNA-directed RNA polymerases I, II, and III subunit RPABC4 (70 aa).

Zn(2+) is bound by residues Cys31, Cys34, Cys48, and Cys51. A C4-type zinc finger spans residues 31–51 (CAECSSKLSLSRTDAVRCKDC).

It belongs to the archaeal Rpo12/eukaryotic RPC10 RNA polymerase subunit family. As to quaternary structure, component of the RNA polymerase I (Pol I), RNA polymerase II (Pol II) and RNA polymerase III (Pol III) complexes. Component of the RNA polymerase I (Pol I) complex consisting of 14 subunits: RPA135, RPA190, RPC40, RPA14, RPB5, RPO26, RPA43, RPB8, RPA12, RPB10, RPC19, RPC10, RPA49 and RPA34. The complex is composed of a horseshoe-shaped core containing ten subunits (RPA135, RPA190, RPB5, RPO26, RPB8, RPB10, RPC10, RPA12, RPC19 and RPC40) where RPA135 and RPA190 form the DNA-binding cleft. Outside of the core, RPA14 and RPA43 form the stalk that mediates interactions with transcription initiation factors and newly synthesized RNA. Component of the RNA polymerase II (Pol II) complex consisting of 12 subunits: RPO21, RPB2, RPB3, RPB4, RPB5, RPO26, RPB7, RPB8, RPB9, RPB10 and RPC10. Component of the RNA polymerase III (Pol III) complex consisting of 17 subunits. Interacts, via its C-terminus, with TFIIIC subunit TFC4. In terms of processing, the N-terminus is blocked.

The protein resides in the nucleus. Its subcellular location is the nucleolus. The protein localises to the peroxisome. DNA-dependent RNA polymerases catalyze the transcription of DNA into RNA using the four ribonucleoside triphosphates as substrates. Common component of RNA polymerases I, II and III which synthesize ribosomal RNA precursors, mRNA precursors and many functional non-coding RNAs, and a small RNAs, such as 5S rRNA and tRNAs, respectively. RNA polymerases are composed of mobile elements that move relative to each other. In Pol II, the core element with the central large cleft comprises RPB3, RBP10, RPB11, RPB12 and regions of RPB1 and RPB2 forming the active center. The chain is DNA-directed RNA polymerases I, II, and III subunit RPABC4 (RPC10) from Saccharomyces cerevisiae (strain ATCC 204508 / S288c) (Baker's yeast).